The primary structure comprises 265 residues: RNA polymerase sigma factor SigI2 (265 aa).

Residues 71–84 (DEFSVGLAAFNEAI) carry the Polymerase core binding motif. A DNA-binding region (H-T-H motif) is located at residues 211–230 (KTELLKLLKINKKTIERNRT).

Belongs to the sigma-70 factor family. SigI subfamily. Interacts with RsgI2.

The protein resides in the cytoplasm. Negatively regulated by the anti-sigma-I factor RsgI2. Binding of the polysaccharide substrate to RsgI2 may lead to the release and activation of SigI2. Functionally, sigma factors are initiation factors that promote the attachment of RNA polymerase to specific initiation sites and are then released. This sigma factor is involved in regulation of cellulosomal genes via an external polysaccharide-sensing mechanism. The chain is RNA polymerase sigma factor SigI2 from Acetivibrio thermocellus (strain ATCC 27405 / DSM 1237 / JCM 9322 / NBRC 103400 / NCIMB 10682 / NRRL B-4536 / VPI 7372) (Clostridium thermocellum).